The chain runs to 394 residues: Aspergillopepsin-1 (394 aa).

The signal sequence occupies residues 1-20; that stretch reads MVVFSKTAALVLGLSSAVSA. Residues 21-69 constitute a propeptide, activation peptide; it reads APAPTRKGFTINQIARPANKTRTINLPGMYARSLAKFGGTVPQSVKEAA. In terms of domain architecture, Peptidase A1 spans 85–391; sequence YLTPVTVGKS…NSEGPKLGFA (307 aa). Active-site residues include aspartate 101 and aspartate 283. Residues cysteine 319 and cysteine 354 are joined by a disulfide bond.

This sequence belongs to the peptidase A1 family. As to quaternary structure, monomer.

The protein localises to the secreted. It carries out the reaction Hydrolysis of proteins with broad specificity. Generally favors hydrophobic residues in P1 and P1', but also accepts Lys in P1, which leads to activation of trypsinogen. Does not clot milk.. In terms of biological role, secreted aspartic endopeptidase that allows assimilation of proteinaceous substrates. The scissile peptide bond is attacked by a nucleophilic water molecule activated by two aspartic residues in the active site. Shows a broad primary substrate specificity. Favors hydrophobic residues at the P1 and P1' positions, but also accepts a lysine residue in the P1 position, leading to the activation of trypsinogen and chymotrypsinogen A. In Aspergillus niger (strain ATCC MYA-4892 / CBS 513.88 / FGSC A1513), this protein is Aspergillopepsin-1 (pepA).